Consider the following 232-residue polypeptide: A-type ATP synthase subunit D (232 aa).

The segment at 200–232 (KKIKNKKEAEEEDEDEDESEMTDETVVQTPADD) is disordered. The span at 209 to 222 (EEEDEDEDESEMTD) shows a compositional bias: acidic residues.

The protein belongs to the V-ATPase D subunit family. Has multiple subunits with at least A(3), B(3), C, D, E, F, H, I and proteolipid K(x).

The protein localises to the cell membrane. Its function is as follows. Component of the A-type ATP synthase that produces ATP from ADP in the presence of a proton gradient across the membrane. The polypeptide is A-type ATP synthase subunit D (Haloquadratum walsbyi (strain DSM 16790 / HBSQ001)).